The following is a 192-amino-acid chain: MSDYFLLFIGTVLVNNFVLVKFLGLCPFMGVSNKIETAVGMSFATTFVLTLTAAVSYIVNKYILLPLDLVYLQTIGFILVIAVVVQFTEMVMHKTSPTLYRLLGIFLPLITTNCAILGLALLNINEDHDFVESIIYGFSAGVGFSLVLVVFSSMRERLAASDIPLPFKGGSIAMITAGLMSLAFMGFTGLIK.

6 consecutive transmembrane segments (helical) span residues 5 to 25, 39 to 59, 63 to 83, 102 to 122, 134 to 154, and 171 to 191; these read FLLFIGTVLVNNFVLVKFLGL, VGMSFATTFVLTLTAAVSYIV, ILLPLDLVYLQTIGFILVIAV, LLGIFLPLITTNCAILGLALL, IIYGFSAGVGFSLVLVVFSSM, and SIAMITAGLMSLAFMGFTGLI.

The protein belongs to the NqrDE/RnfAE family. As to quaternary structure, the complex is composed of six subunits: RnfA, RnfB, RnfC, RnfD, RnfE and RnfG.

The protein resides in the cell inner membrane. In terms of biological role, part of a membrane-bound complex that couples electron transfer with translocation of ions across the membrane. The sequence is that of Ion-translocating oxidoreductase complex subunit A from Psychromonas ingrahamii (strain DSM 17664 / CCUG 51855 / 37).